We begin with the raw amino-acid sequence, 167 residues long: Small ribosomal subunit protein uS5 (167 aa).

The region spanning 12 to 75 (LQEKLIAVNR…EKARRSMVTI (64 aa)) is the S5 DRBM domain.

It belongs to the universal ribosomal protein uS5 family. Part of the 30S ribosomal subunit. Contacts proteins S4 and S8.

Its function is as follows. With S4 and S12 plays an important role in translational accuracy. Located at the back of the 30S subunit body where it stabilizes the conformation of the head with respect to the body. The chain is Small ribosomal subunit protein uS5 from Vibrio cholerae serotype O1 (strain ATCC 39541 / Classical Ogawa 395 / O395).